The following is a 301-amino-acid chain: Protoheme IX farnesyltransferase (301 aa).

Transmembrane regions (helical) follow at residues 20–42, 55–75, 105–125, 126–146, 150–172, 176–198, 227–247, 249–269, and 280–300; these read FTEL…GMWL, VDVI…SGAF, ALMV…MTTW, QAGV…SLYA, LVSN…WFAV, FSIV…FYAI, MFFW…LGIV, VVLA…GFKM, and FVYS…ISIF.

It belongs to the UbiA prenyltransferase family. Protoheme IX farnesyltransferase subfamily. As to quaternary structure, interacts with CtaA.

The protein resides in the cell membrane. It carries out the reaction heme b + (2E,6E)-farnesyl diphosphate + H2O = Fe(II)-heme o + diphosphate. The protein operates within porphyrin-containing compound metabolism; heme O biosynthesis; heme O from protoheme: step 1/1. Functionally, converts heme B (protoheme IX) to heme O by substitution of the vinyl group on carbon 2 of heme B porphyrin ring with a hydroxyethyl farnesyl side group. This chain is Protoheme IX farnesyltransferase, found in Listeria monocytogenes serotype 4b (strain CLIP80459).